The following is a 727-amino-acid chain: Fatty acid oxidation complex subunit alpha (727 aa).

The segment at 16-205 is enoyl-CoA hydratase; the sequence is NQTASVFSFD…RLGLVDDAVP (190 aa). Residues 321–727 are 3-hydroxyacyl-CoA dehydrogenase; it reads AKIKHVGILG…MAEQNKSFYP (407 aa).

The protein in the N-terminal section; belongs to the enoyl-CoA hydratase/isomerase family. In the central section; belongs to the 3-hydroxyacyl-CoA dehydrogenase family. As to quaternary structure, heterotetramer of two alpha chains (FadJ) and two beta chains (FadI).

The protein localises to the cytoplasm. It carries out the reaction a (3S)-3-hydroxyacyl-CoA = a (2E)-enoyl-CoA + H2O. The enzyme catalyses a 4-saturated-(3S)-3-hydroxyacyl-CoA = a (3E)-enoyl-CoA + H2O. The catalysed reaction is a (3S)-3-hydroxyacyl-CoA + NAD(+) = a 3-oxoacyl-CoA + NADH + H(+). It catalyses the reaction (3S)-3-hydroxybutanoyl-CoA = (3R)-3-hydroxybutanoyl-CoA. It functions in the pathway lipid metabolism; fatty acid beta-oxidation. In terms of biological role, catalyzes the formation of a hydroxyacyl-CoA by addition of water on enoyl-CoA. Also exhibits 3-hydroxyacyl-CoA epimerase and 3-hydroxyacyl-CoA dehydrogenase activities. The protein is Fatty acid oxidation complex subunit alpha of Photorhabdus laumondii subsp. laumondii (strain DSM 15139 / CIP 105565 / TT01) (Photorhabdus luminescens subsp. laumondii).